Consider the following 371-residue polypeptide: Serpentine receptor class delta-1 (371 aa).

The next 7 helical transmembrane spans lie at 31–51, 62–82, 109–129, 148–168, 209–229, 267–287, and 295–315; these read LSEVICGFGIVLNLLLIYVIF, AVLLFNFAIFDLLTCVASLLA, CFFCHCFVCHAMAHSQWILLI, MIVIVSLFYAMSAVIFLFYFW, IPSLIAIFYMTMPCVPIYFII, AIPIFWLVASGIFTLAEFGII, and ITFRLMDCIPSSSPLVAFIFI. A disordered region spans residues 344–371; the sequence is EKFNQPPKQPTNPAQQSANNDAAKTEKV. Positions 354-365 are enriched in polar residues; the sequence is TNPAQQSANNDA.

This sequence belongs to the nematode receptor-like protein srd family.

Its subcellular location is the membrane. The sequence is that of Serpentine receptor class delta-1 (srd-1) from Caenorhabditis elegans.